We begin with the raw amino-acid sequence, 180 residues long: Large ribosomal subunit protein uL5 (180 aa).

This sequence belongs to the universal ribosomal protein uL5 family. Part of the 50S ribosomal subunit; part of the 5S rRNA/L5/L18/L25 subcomplex. Contacts the 5S rRNA and the P site tRNA. Forms a bridge to the 30S subunit in the 70S ribosome.

Its function is as follows. This is one of the proteins that bind and probably mediate the attachment of the 5S RNA into the large ribosomal subunit, where it forms part of the central protuberance. In the 70S ribosome it contacts protein S13 of the 30S subunit (bridge B1b), connecting the 2 subunits; this bridge is implicated in subunit movement. Contacts the P site tRNA; the 5S rRNA and some of its associated proteins might help stabilize positioning of ribosome-bound tRNAs. The chain is Large ribosomal subunit protein uL5 from Roseiflexus castenholzii (strain DSM 13941 / HLO8).